A 391-amino-acid polypeptide reads, in one-letter code: tRNA (cytosine(38)-C(5))-methyltransferase (391 aa).

Positions 4-391 (LRVLELYSGV…VAKLIKILYE (388 aa)) constitute an SAM-dependent MTase C5-type domain. Residues 13–15 (VGG), Asp34, 57–58 (IE), and Ser76 contribute to the S-adenosyl-L-methionine site. Cys79 is a catalytic residue. Ser376 contributes to the S-adenosyl-L-methionine binding site.

This sequence belongs to the class I-like SAM-binding methyltransferase superfamily. C5-methyltransferase family. As to expression, ubiquitous. Higher expression in testis, ovary and thymus and at much lower levels in spleen, prostate, colon, small intestine, and peripheral blood leukocytes.

Its subcellular location is the cytoplasm. The enzyme catalyses cytidine(38) in tRNA + S-adenosyl-L-methionine = 5-methylcytidine(38) in tRNA + S-adenosyl-L-homocysteine + H(+). Functionally, specifically methylates cytosine 38 in the anticodon loop of tRNA(Asp). Has higher activity on tRNA(Asp) modified with queuosine at position 34. The protein is tRNA (cytosine(38)-C(5))-methyltransferase (TRDMT1) of Homo sapiens (Human).